Consider the following 603-residue polypeptide: DNA mismatch repair protein MutL (603 aa).

The protein belongs to the DNA mismatch repair MutL/HexB family.

This protein is involved in the repair of mismatches in DNA. It is required for dam-dependent methyl-directed DNA mismatch repair. May act as a 'molecular matchmaker', a protein that promotes the formation of a stable complex between two or more DNA-binding proteins in an ATP-dependent manner without itself being part of a final effector complex. The sequence is that of DNA mismatch repair protein MutL from Bradyrhizobium diazoefficiens (strain JCM 10833 / BCRC 13528 / IAM 13628 / NBRC 14792 / USDA 110).